Consider the following 133-residue polypeptide: DNA-directed RNA polymerase subunit omega (133 aa).

Belongs to the RNA polymerase subunit omega family. The RNAP catalytic core consists of 2 alpha, 1 beta, 1 beta' and 1 omega subunit. When a sigma factor is associated with the core the holoenzyme is formed, which can initiate transcription.

The catalysed reaction is RNA(n) + a ribonucleoside 5'-triphosphate = RNA(n+1) + diphosphate. In terms of biological role, promotes RNA polymerase assembly. Latches the N- and C-terminal regions of the beta' subunit thereby facilitating its interaction with the beta and alpha subunits. This chain is DNA-directed RNA polymerase subunit omega, found in Mesorhizobium japonicum (strain LMG 29417 / CECT 9101 / MAFF 303099) (Mesorhizobium loti (strain MAFF 303099)).